A 255-amino-acid chain; its full sequence is Dehydrogenase/reductase SDR family member 11 (255 aa).

Residues 1–23 (MERWTGRVALVTGASVGIGAAVA) form the signal peptide. Residues 13-18 (GASVGI), 38-39 (RS), E44, 65-66 (DL), and N92 contribute to the NADP(+) site. Substrate contacts are provided by S146 and Y161. Residues Y161, K165, 196–199 (VETG), and K203 each bind NADP(+). The Proton acceptor role is filled by Y161.

It belongs to the short-chain dehydrogenases/reductases (SDR) family.

It is found in the secreted. The catalysed reaction is a 3beta-hydroxysteroid + NADP(+) = a 3-oxosteroid + NADPH + H(+). It catalyses the reaction 17beta-estradiol + NAD(+) = estrone + NADH + H(+). It carries out the reaction 17beta-estradiol + NADP(+) = estrone + NADPH + H(+). It functions in the pathway steroid biosynthesis; estrogen biosynthesis. Its activity is regulated as follows. Inhibited by flavonoids including apigenin, luteolin, genistein, kaempferol and quercetin and also by carbenoxolone, zearalenone, glycyrrhetinic, curcumin and flufenamic acid. Functionally, catalyzes the conversion of the 17-keto group of estrone, 4- and 5-androstenes and 5-alpha-androstanes into their 17-beta-hydroxyl metabolites and the conversion of the 3-keto group of 3-, 3,17- and 3,20- diketosteroids into their 3-hydroxyl metabolites. Exhibits reductive 3-beta-hydroxysteroid dehydrogenase activity toward 5-beta-androstanes, 5-beta-pregnanes, 4-pregnenes and bile acids. May also reduce endogenous and exogenous alpha-dicarbonyl compounds and xenobiotic alicyclic ketones. This chain is Dehydrogenase/reductase SDR family member 11 (DHRS11), found in Gallus gallus (Chicken).